The following is a 568-amino-acid chain: NADPH oxidase 3 (568 aa).

Residues 1–12 (MPTCWILNESVS) lie on the Cytoplasmic side of the membrane. The chain crosses the membrane as a helical span at residues 13–33 (FVVALLWLAINIYLFIDTFCW). The Extracellular portion of the chain corresponds to 34 to 49 (YAEEESFFYTRVILGS). A helical transmembrane segment spans residues 50–70 (ALAWARASAVCLNFNCMLILL). The Ferric oxidoreductase domain occupies 55 to 284 (RASAVCLNFN…VVLYACEIII (230 aa)). Over 71-103 (PVSRNFVSLVRGTSVCCRGPWRRQLDKNLKFHK) the chain is Cytoplasmic. The helical transmembrane segment at 104-124 (LVAYGIAVNSVIHIVAHLFNL) threads the bilayer. Residues 125 to 167 (ERYHLGQAKDAEGLLAALSKLGNAPNESYLNPVRTLYTGTTTQ) are Extracellular-facing. The chain crosses the membrane as a helical span at residues 168–188 (LLMTVSGITGLVISLALILIM). Over 189–201 (TSSTEFIRQSSYE) the chain is Cytoplasmic. Residues 202-222 (LFWYTHHIFIFLFISLAIHGG) traverse the membrane as a helical segment. Topologically, residues 223 to 395 (GRIIRGQTPE…DGPFGGSLAD (173 aa)) are extracellular. Asn238 carries N-linked (GlcNAc...) asparagine glycosylation. Residues 285-395 (RFWRSHQEVV…DGPFGGSLAD (111 aa)) enclose the FAD-binding FR-type domain. The chain crosses the membrane as a helical span at residues 396–416 (VFHYPVSVCIATGIGVTPFAS). Residues 417–568 (LLKSVWYKCC…VHFYYNKENF (152 aa)) are Cytoplasmic-facing.

In terms of assembly, forms a heterodimer with CYBA/p22phox which is essential for its activity and cell membrane localization. Heme serves as cofactor. Post-translationally, N-glycosylated in a CYBA/p22phox-dependent manner. Expressed in the inner ear by the spiral glanglia and the organ of Corti.

Its subcellular location is the cell membrane. It catalyses the reaction NADPH + 2 O2 = 2 superoxide + NADP(+) + H(+). With respect to regulation, activated by the ototoxic drug cisplatin. Activated by NOXO1. Cooperatively activated by NCF1 and NCF2 or NOXA1 in a phorbol 12-myristate 13-acetate (PMA)-dependent manner. Inhibited by diphenyleneiodonium chloride. In terms of biological role, NADPH oxidase that catalyzes the generation of superoxide from molecular oxygen utilizing NADPH as an electron donor, upon formation of a complex with CYBA/p22phox. Plays a role in the biogenesis of otoconia/otolith, which are crystalline structures of the inner ear involved in the perception of gravity. This Rattus norvegicus (Rat) protein is NADPH oxidase 3 (Nox3).